Here is a 135-residue protein sequence, read N- to C-terminus: Large ribosomal subunit protein uL18 (135 aa).

The tract at residues 1 to 23 (MAQTQADTAARKPVGQSVSATRR) is disordered.

The protein belongs to the universal ribosomal protein uL18 family. In terms of assembly, part of the 50S ribosomal subunit; part of the 5S rRNA/L5/L18/L25 subcomplex. Contacts the 5S and 23S rRNAs.

In terms of biological role, this is one of the proteins that bind and probably mediate the attachment of the 5S RNA into the large ribosomal subunit, where it forms part of the central protuberance. The polypeptide is Large ribosomal subunit protein uL18 (Mycobacterium marinum (strain ATCC BAA-535 / M)).